The following is a 181-amino-acid chain: CASP-like protein UU-1 (181 aa).

Residues 1–30 (MTMELESQEVVVETTTAAAAARAASAAHVR) are Cytoplasmic-facing. Residues 31–51 (TTVALRLLAFAASLAAAVVVA) traverse the membrane as a helical segment. Residues 52-65 (TNRQERWGITVTFK) lie on the Extracellular side of the membrane. A helical membrane pass occupies residues 66–86 (MFAVWEAFVAINFACAAYALL). The Cytoplasmic segment spans residues 87 to 107 (TAVFVKKLVSKHWLHHMDQFT). Residues 108–128 (VNLQAASTAGAGAVGSVAMWG) traverse the membrane as a helical segment. The Extracellular segment spans residues 129–147 (NEPSGWYAVCRLYRLYCDR). The chain crosses the membrane as a helical span at residues 148 to 168 (GAVSLALAFVAFVAFGVASSL). At 169-181 (SRYPRAPPPPAPR) the chain is on the cytoplasmic side.

This sequence belongs to the Casparian strip membrane proteins (CASP) family. As to quaternary structure, homodimer and heterodimers.

The protein localises to the cell membrane. In Sorghum bicolor (Sorghum), this protein is CASP-like protein UU-1.